Consider the following 306-residue polypeptide: MSRPRKRWRDVDGVFLLDKPQGMSSNDIMQKVKRLFQANKAGHTGALDPLATGMLPICLGEATKFSQFLLDADKRYLVTAKLGERTDTSDAEGQVVETREVHVETPQILTALEQFRGDILQVPTMFSALKHNGKPLYEYARQGITVEREARPITIFELNFIEYHAPFLTLEVHCSKGTYIRTLVDDLGEVLGCGAHVTMLRRTAVADYPVAEMMPINELQLLAESFPLSELDRLLLPTDTAVSKLPALHLDVEQSKAIGFGQRVKFANEQQLSGQVRLFSAENLFLGVALIDGNIIRPQRLITQSA.

The active-site Nucleophile is D48.

This sequence belongs to the pseudouridine synthase TruB family. Type 1 subfamily.

The catalysed reaction is uridine(55) in tRNA = pseudouridine(55) in tRNA. In terms of biological role, responsible for synthesis of pseudouridine from uracil-55 in the psi GC loop of transfer RNAs. The chain is tRNA pseudouridine synthase B from Haemophilus influenzae (strain PittEE).